The following is an 882-amino-acid chain: Valine--tRNA ligase (882 aa).

The 'HIGH' region motif lies at 45-55; sequence PNVTGKLHLGH. The 'KMSKS' region signature appears at 519-523; the sequence is KMSKS. Lys-522 lines the ATP pocket. A coiled-coil region spans residues 808–882; sequence LADLLNVEEE…RIAEMKKIKS (75 aa).

It belongs to the class-I aminoacyl-tRNA synthetase family. ValS type 1 subfamily. Monomer.

It is found in the cytoplasm. It catalyses the reaction tRNA(Val) + L-valine + ATP = L-valyl-tRNA(Val) + AMP + diphosphate. In terms of biological role, catalyzes the attachment of valine to tRNA(Val). As ValRS can inadvertently accommodate and process structurally similar amino acids such as threonine, to avoid such errors, it has a 'posttransfer' editing activity that hydrolyzes mischarged Thr-tRNA(Val) in a tRNA-dependent manner. The protein is Valine--tRNA ligase of Streptococcus pyogenes serotype M1.